The sequence spans 360 residues: Peptide chain release factor 1 (360 aa).

The residue at position 237 (Gln-237) is an N5-methylglutamine.

Belongs to the prokaryotic/mitochondrial release factor family. Post-translationally, methylated by PrmC. Methylation increases the termination efficiency of RF1.

The protein localises to the cytoplasm. Functionally, peptide chain release factor 1 directs the termination of translation in response to the peptide chain termination codons UAG and UAA. The protein is Peptide chain release factor 1 of Pseudomonas putida (strain GB-1).